A 110-amino-acid chain; its full sequence is MSVVIRLARAGTKKRPVYHVVVADSRFPRDGRFIERLGYFNPLLPKDNEARLKLDMDKVKAWLAKGAQPSDRVMRFLDAAGVAKRAPRNNPEKAVPRKERKAAAEAAAKA.

The disordered stretch occupies residues Lys84–Ala110. Over residues Asn90 to Ala103 the composition is skewed to basic and acidic residues.

Belongs to the bacterial ribosomal protein bS16 family.

This is Small ribosomal subunit protein bS16 from Afipia carboxidovorans (strain ATCC 49405 / DSM 1227 / KCTC 32145 / OM5) (Oligotropha carboxidovorans).